The following is a 428-amino-acid chain: CRISPR system endoribonuclease Csm6 (428 aa).

Residues 1–145 (MKILISAVGT…RANREYTALT (145 aa)) form a CARF domain region. The tract at residues 146 to 428 (ESEIDALIME…QNKELIKMLE (283 aa)) is HEPN domain.

The protein belongs to the CRISPR-associated Csm6 family. Homodimer. The composite ssRNase active site is formed at the dimer interface.

Non-specific ssRNase activity is allosterically activated about 1000-fold by cyclic hexaadenylate (cA6), a second messenger produced by Cas10 of the ternary Csm effector complex in the presence of a cognate target RNA. ssRNase activity is inhibited by physiological concentrations of ATP (1 mM), activity is restored by cOA. CRISPR (clustered regularly interspaced short palindromic repeat) is an adaptive immune system that provides protection against mobile genetic elements (viruses, transposable elements and conjugative plasmids). CRISPR clusters contain spacers, sequences complementary to antecedent mobile elements, and target invading nucleic acids. CRISPR clusters are transcribed and processed into CRISPR RNA (crRNA). The type III-A Csm complex binds crRNA and acts as a crRNA-guided RNase, DNase and cyclic oligoadenylate synthase; binding of target RNA cognate to the crRNA is required for all activities. In a heterologous host this Csm effector complex restricts ssRNA phage MS2, suggesting it may target RNA viruses in vivo. This protein is not part of the Csm complex. In terms of biological role, csm functions as a non-specific ssDNase. Base-pairing between crRNA and target RNA to form a ternary Csm complex activates a ssDNase activity; target RNA cleavage suppresses the ssDNase, a temporal control that prevents uncontrolled DNA degradation. Viral RNA transcripts probably tether the Csm complex to the viral genome, recruiting Cas10 ssDNA activity which is able to degrade DNA in the transcription bubble, spatially controlling the DNase activity. Functionally, a single-strand-specific endoribonuclease (ssRNase) that is approximately 1000-fold stimulated by cyclic oligoadenylate (cOA); although several species of cOA are synthesized by this organism only cyclic hexaadenylate (cA6) stimulates the ssRNase activity. Cleaves preferentially within GA or AA dinucleotides, although the presence of cA6 broadens the preference. Linear oligoadenylates do not activate the RNase. The chain is CRISPR system endoribonuclease Csm6 from Streptococcus thermophilus.